The following is a 95-amino-acid chain: Large ribosomal subunit protein bL27 (95 aa).

The interval 1–24 (MAHKKGTGSTRNGRDSNSQRLGVK) is disordered. Over residues 7-20 (TGSTRNGRDSNSQR) the composition is skewed to polar residues.

It belongs to the bacterial ribosomal protein bL27 family.

The protein is Large ribosomal subunit protein bL27 of Trichodesmium erythraeum (strain IMS101).